A 244-amino-acid chain; its full sequence is MWLGDYSLLNLLGIFLQATFIQNILLSTFLGMCSYLACSSRLSTANGLGMSVALVLTITGSINWLVHYFITKPGALAWLSPALANIDLSFLELIMFIVVIAAFTQILELLLERFSRNLYLALGIFLPLIAVNCAILGGVLFGITRNYPFLPMVVFSLGSGCGWWLAIVLFATIREKLAYSDVPQHLRGTGISFITTGLMAMAFMGLTGIDISKPTTSKPAFVMNIATDSPQPNTHSSSEEPKAS.

Transmembrane regions (helical) follow at residues Leu-11 to Gly-31, Met-50 to Ile-70, Phe-90 to Leu-110, Gly-123 to Ile-143, Val-153 to Ile-173, and Ile-191 to Ile-211.

This sequence belongs to the NqrDE/RnfAE family. Composed of six subunits; NqrA, NqrB, NqrC, NqrD, NqrE and NqrF.

The protein resides in the cell inner membrane. It carries out the reaction a ubiquinone + n Na(+)(in) + NADH + H(+) = a ubiquinol + n Na(+)(out) + NAD(+). Its function is as follows. NQR complex catalyzes the reduction of ubiquinone-1 to ubiquinol by two successive reactions, coupled with the transport of Na(+) ions from the cytoplasm to the periplasm. NqrA to NqrE are probably involved in the second step, the conversion of ubisemiquinone to ubiquinol. The polypeptide is Na(+)-translocating NADH-quinone reductase subunit E (Chlamydia trachomatis serovar L2 (strain ATCC VR-902B / DSM 19102 / 434/Bu)).